Here is a 229-residue protein sequence, read N- to C-terminus: uncharacterized protein (229 aa).

The tract at residues 1–102 (MKLLGRKKSY…AASKAQITDR (102 aa)) is disordered. Residues 73 to 94 (ARRKSLAPPKCHRAERRAKRAA) show a composition bias toward basic residues. The next 2 membrane-spanning stretches (helical) occupy residues 137 to 157 (LGLFTPSALVLLFITFGVPQL) and 159 to 179 (LYMSPAMLVLLSVMGIDGIIL).

The protein localises to the cell membrane. This is an uncharacterized protein from Mycobacterium leprae (strain TN).